The sequence spans 206 residues: Sperm acrosome developmental regulator (206 aa).

Positions Arg-180–Leu-206 are disordered.

As to expression, expressed in sperm (at protein level).

It is found in the cytoplasmic vesicle. The protein localises to the secretory vesicle. It localises to the acrosome. Its function is as follows. May play a role in acrosome formation and nucleus shaping during spermiogenesis. This is Sperm acrosome developmental regulator from Homo sapiens (Human).